We begin with the raw amino-acid sequence, 305 residues long: Glycine--tRNA ligase alpha subunit (305 aa).

This sequence belongs to the class-II aminoacyl-tRNA synthetase family. Tetramer of two alpha and two beta subunits.

Its subcellular location is the cytoplasm. The catalysed reaction is tRNA(Gly) + glycine + ATP = glycyl-tRNA(Gly) + AMP + diphosphate. This Vibrio campbellii (strain ATCC BAA-1116) protein is Glycine--tRNA ligase alpha subunit.